Here is a 563-residue protein sequence, read N- to C-terminus: Eukaryotic translation initiation factor 3 subunit D-1 (563 aa).

The tract at residues 98–167 is disordered; sequence VQKPPHQRGR…GPPPKMRESS (70 aa). The span at 100-121 shows a compositional bias: basic residues; that stretch reads KPPHQRGRFRNMRNSRSGRGRN. At threonine 128 the chain carries Phosphothreonine. The interval 291-305 is RNA gate; sequence EFDLLTVNESSVEPP.

Belongs to the eIF-3 subunit D family. Component of the eukaryotic translation initiation factor 3 (eIF-3) complex. The eIF-3 complex interacts with pix.

The protein resides in the cytoplasm. Its function is as follows. mRNA cap-binding component of the eukaryotic translation initiation factor 3 (eIF-3) complex, which is involved in protein synthesis of a specialized repertoire of mRNAs and, together with other initiation factors, stimulates binding of mRNA and methionyl-tRNAi to the 40S ribosome. The eIF-3 complex specifically targets and initiates translation of a subset of mRNAs involved in cell proliferation. In the eIF-3 complex, eif3d specifically recognizes and binds the 7-methylguanosine cap of a subset of mRNAs. The chain is Eukaryotic translation initiation factor 3 subunit D-1 from Drosophila grimshawi (Hawaiian fruit fly).